We begin with the raw amino-acid sequence, 384 residues long: Deoxyguanosinetriphosphate triphosphohydrolase-like protein (384 aa).

In terms of domain architecture, HD spans 62–198 (RLTHSLEVST…AALADDISYI (137 aa)).

It belongs to the dGTPase family. Type 2 subfamily.

This chain is Deoxyguanosinetriphosphate triphosphohydrolase-like protein, found in Rickettsia rickettsii (strain Iowa).